The chain runs to 302 residues: Protein ECM11 (302 aa).

2 disordered regions span residues M1–Q67 and S162–Q187. Residues N35–G46 are compositionally biased toward polar residues. Positions A56–Q67 are enriched in basic and acidic residues. Residues S162–P171 are compositionally biased toward polar residues.

In terms of assembly, interacts with CDC6.

It localises to the nucleus. Its function is as follows. May be involved in cell wall organization and biogenesis. The sequence is that of Protein ECM11 (ECM11) from Saccharomyces cerevisiae (strain ATCC 204508 / S288c) (Baker's yeast).